A 212-amino-acid polypeptide reads, in one-letter code: ATP phosphoribosyltransferase (212 aa).

It belongs to the ATP phosphoribosyltransferase family. Short subfamily. As to quaternary structure, heteromultimer composed of HisG and HisZ subunits.

Its subcellular location is the cytoplasm. The catalysed reaction is 1-(5-phospho-beta-D-ribosyl)-ATP + diphosphate = 5-phospho-alpha-D-ribose 1-diphosphate + ATP. Its pathway is amino-acid biosynthesis; L-histidine biosynthesis; L-histidine from 5-phospho-alpha-D-ribose 1-diphosphate: step 1/9. In terms of biological role, catalyzes the condensation of ATP and 5-phosphoribose 1-diphosphate to form N'-(5'-phosphoribosyl)-ATP (PR-ATP). Has a crucial role in the pathway because the rate of histidine biosynthesis seems to be controlled primarily by regulation of HisG enzymatic activity. The sequence is that of ATP phosphoribosyltransferase from Prochlorococcus marinus (strain MIT 9301).